A 192-amino-acid chain; its full sequence is Transposon Tn552 DNA-invertase BinR (192 aa).

One can recognise a Resolvase/invertase-type recombinase catalytic domain in the interval Met1–Gly136. Ser9 functions as the O-(5'-phospho-DNA)-serine intermediate in the catalytic mechanism. Residues Ile163 to Asn182 constitute a DNA-binding region (H-T-H motif).

Belongs to the site-specific recombinase resolvase family.

DNA-invertase, mediating the inversion of inv. The protein is Transposon Tn552 DNA-invertase BinR (resR) of Staphylococcus aureus.